The primary structure comprises 104 residues: Small ribosomal subunit protein uS10 (104 aa).

It belongs to the universal ribosomal protein uS10 family. Part of the 30S ribosomal subunit.

Functionally, involved in the binding of tRNA to the ribosomes. This Thermosynechococcus vestitus (strain NIES-2133 / IAM M-273 / BP-1) protein is Small ribosomal subunit protein uS10.